The chain runs to 118 residues: MARIAGVNIPDNKHAAISLTYIFGIGRTRAQEICAATGIAPTAKVQDLSAEEVDTLRNEVGKYTVEGDLRRDTTLNIKRLMDLGCYRGLRHRRGLPLRGQRTKTNARTRKGPRKPIRK.

The disordered stretch occupies residues 94-118; it reads GLPLRGQRTKTNARTRKGPRKPIRK.

This sequence belongs to the universal ribosomal protein uS13 family. Part of the 30S ribosomal subunit. Forms a loose heterodimer with protein S19. Forms two bridges to the 50S subunit in the 70S ribosome.

Functionally, located at the top of the head of the 30S subunit, it contacts several helices of the 16S rRNA. In the 70S ribosome it contacts the 23S rRNA (bridge B1a) and protein L5 of the 50S subunit (bridge B1b), connecting the 2 subunits; these bridges are implicated in subunit movement. Contacts the tRNAs in the A and P-sites. This is Small ribosomal subunit protein uS13 from Chromohalobacter salexigens (strain ATCC BAA-138 / DSM 3043 / CIP 106854 / NCIMB 13768 / 1H11).